The chain runs to 699 residues: DNA ligase (699 aa).

Residues 47-51 (DAQYD), 96-97 (SL), and glutamate 128 contribute to the NAD(+) site. Lysine 130 (N6-AMP-lysine intermediate) is an active-site residue. Residues arginine 151, glutamate 186, lysine 303, and lysine 327 each coordinate NAD(+). Zn(2+) contacts are provided by cysteine 422, cysteine 425, cysteine 440, and cysteine 446. Positions 620–699 (GDNLLLSNQT…EEWIKMVNEL (80 aa)) constitute a BRCT domain.

It belongs to the NAD-dependent DNA ligase family. LigA subfamily. Mg(2+) is required as a cofactor. Requires Mn(2+) as cofactor.

It carries out the reaction NAD(+) + (deoxyribonucleotide)n-3'-hydroxyl + 5'-phospho-(deoxyribonucleotide)m = (deoxyribonucleotide)n+m + AMP + beta-nicotinamide D-nucleotide.. In terms of biological role, DNA ligase that catalyzes the formation of phosphodiester linkages between 5'-phosphoryl and 3'-hydroxyl groups in double-stranded DNA using NAD as a coenzyme and as the energy source for the reaction. It is essential for DNA replication and repair of damaged DNA. In Orientia tsutsugamushi (strain Ikeda) (Rickettsia tsutsugamushi), this protein is DNA ligase.